Consider the following 559-residue polypeptide: MRYSELADLYRRLEKTTLKTLKTKFVADFLKKTPDELLEIVPYLILGKVFPDWDERELGVGEKLLIKAVSMATGVPEKEIEDSVRDTGDLGESVALAIKKKKQKSFFSQPLTIKRVYDTFVKIAEAQGEGSQDRKMKYLANLFMDAEPEEGKYLARTVLGTMRTGVAEGILRDAIAEAFRVKPELVERAYMLTSDFGYVAKIAKLEGNEGLSKVRIQIGKPIRPMLAQNAASVKDALIEMGGEAAFEIKYDGARVQVHKDGDKVIVYSRRLENVTRSIPEVIEAIKAALKPEKAIVEGELVAVGENGRPRPFQYVLRRFRRKYNIDEMIEKIPLELNLFDVMFVDGESLIETKFIDRRNKLEEIVKESEKIKLAEQLITKKVEEAEAFYRRALELGHEGLMAKRLDSIYEPGNRGKKWLKIKPTMENLDLVIIGAEWGEGRRAHLLGSFLVAAYDPHSGEFLPVGKVGSGFTDEDLVEFTKMLKPYIVRQEGKFVEIEPKFVIEVTYQEIQKSPKYKSGFALRFPRYVALREDKSPEEADTIERVAELYELQERFKAKK.

An ATP-binding site is contributed by E247. K249 acts as the N6-AMP-lysine intermediate in catalysis. The ATP site is built by R254, R269, E299, F339, R414, and K420.

Belongs to the ATP-dependent DNA ligase family. As to quaternary structure, monomer. Mg(2+) is required as a cofactor.

The catalysed reaction is ATP + (deoxyribonucleotide)n-3'-hydroxyl + 5'-phospho-(deoxyribonucleotide)m = (deoxyribonucleotide)n+m + AMP + diphosphate.. It carries out the reaction NAD(+) + (deoxyribonucleotide)n-3'-hydroxyl + 5'-phospho-(deoxyribonucleotide)m = (deoxyribonucleotide)n+m + AMP + beta-nicotinamide D-nucleotide.. DNA ligase that seals nicks in double-stranded DNA during DNA replication, DNA recombination and DNA repair. Can also use NAD, but less efficiently than ATP. The protein is DNA ligase of Thermococcus kodakarensis (strain ATCC BAA-918 / JCM 12380 / KOD1) (Pyrococcus kodakaraensis (strain KOD1)).